We begin with the raw amino-acid sequence, 390 residues long: GTPase Obg (390 aa).

Residues M1–L159 form the Obg domain. The tract at residues N127 to G147 is disordered. The span at R129 to T145 shows a compositional bias: polar residues. Residues A160–L333 enclose the OBG-type G domain. GTP is bound by residues G166–S173, F191–V195, D213–G216, N283–D286, and S314–A316. Mg(2+) contacts are provided by S173 and T193.

The protein belongs to the TRAFAC class OBG-HflX-like GTPase superfamily. OBG GTPase family. Monomer. Mg(2+) is required as a cofactor.

It is found in the cytoplasm. Its function is as follows. An essential GTPase which binds GTP, GDP and possibly (p)ppGpp with moderate affinity, with high nucleotide exchange rates and a fairly low GTP hydrolysis rate. Plays a role in control of the cell cycle, stress response, ribosome biogenesis and in those bacteria that undergo differentiation, in morphogenesis control. This chain is GTPase Obg, found in Shigella sonnei (strain Ss046).